A 188-amino-acid polypeptide reads, in one-letter code: Phosphoribosylglycinamide formyltransferase (188 aa).

12–14 lines the N(1)-(5-phospho-beta-D-ribosyl)glycinamide pocket; that stretch reads GSN. Residues Lys-66, 91–94, and Asn-108 contribute to the (6R)-10-formyltetrahydrofolate site; that span reads MRLI. The active-site Proton donor is the His-110.

The protein belongs to the GART family.

It carries out the reaction N(1)-(5-phospho-beta-D-ribosyl)glycinamide + (6R)-10-formyltetrahydrofolate = N(2)-formyl-N(1)-(5-phospho-beta-D-ribosyl)glycinamide + (6S)-5,6,7,8-tetrahydrofolate + H(+). It functions in the pathway purine metabolism; IMP biosynthesis via de novo pathway; N(2)-formyl-N(1)-(5-phospho-D-ribosyl)glycinamide from N(1)-(5-phospho-D-ribosyl)glycinamide (10-formyl THF route): step 1/1. Functionally, catalyzes the transfer of a formyl group from 10-formyltetrahydrofolate to 5-phospho-ribosyl-glycinamide (GAR), producing 5-phospho-ribosyl-N-formylglycinamide (FGAR) and tetrahydrofolate. This Staphylococcus aureus (strain Mu50 / ATCC 700699) protein is Phosphoribosylglycinamide formyltransferase.